Here is a 157-residue protein sequence, read N- to C-terminus: Large ribosomal subunit protein uL3 (157 aa).

The interval 57-98 (GKGFAGSIKRHNQSRGPESHGSRYHRRPGSMGPIKGKLKGKK) is disordered.

Belongs to the universal ribosomal protein uL3 family. In terms of assembly, part of the 50S ribosomal subunit. Forms a cluster with proteins L14 and L19.

Its function is as follows. One of the primary rRNA binding proteins, it binds directly near the 3'-end of the 23S rRNA, where it nucleates assembly of the 50S subunit. The polypeptide is Large ribosomal subunit protein uL3 (rplC) (Onion yellows phytoplasma (strain OY-M)).